A 116-amino-acid chain; its full sequence is Large ribosomal subunit protein uL22c (116 aa).

It belongs to the universal ribosomal protein uL22 family. As to quaternary structure, part of the 50S ribosomal subunit.

The protein localises to the plastid. It is found in the chloroplast. Functionally, this protein binds specifically to 23S rRNA. Its function is as follows. The globular domain of the protein is located near the polypeptide exit tunnel on the outside of the subunit, while an extended beta-hairpin is found that lines the wall of the exit tunnel in the center of the 70S ribosome. The chain is Large ribosomal subunit protein uL22c (rpl22) from Psilotum nudum (Whisk fern).